Consider the following 437-residue polypeptide: Magnetosome protein MamN (437 aa).

Transmembrane regions (helical) follow at residues 26 to 46 (LAVL…GSYT), 53 to 73 (SVYF…ALLA), 95 to 115 (WILV…NSLV), 136 to 156 (VPVI…TMIG), 174 to 194 (FIAG…VFFE), 226 to 246 (LLSY…LAGP), 252 to 268 (GWIA…LGRF), 281 to 301 (DILF…VGIL), 320 to 340 (AILL…GTSA), 358 to 378 (AAWW…LPGA), and 416 to 436 (WGMP…AVLV).

This sequence belongs to the arsenite-antimonite (ArsB) efflux (TC 2.A.45) family.

Its subcellular location is the magnetosome membrane. Its function is as follows. Plays a role in biomineralization; might regulate pH in the magnetosome. This chain is Magnetosome protein MamN (mamN), found in Paramagnetospirillum magneticum (strain ATCC 700264 / AMB-1) (Magnetospirillum magneticum).